Here is a 92-residue protein sequence, read N- to C-terminus: DNA-directed RNA polymerase subunit Rpo11 (92 aa).

It belongs to the archaeal Rpo11/eukaryotic RPB11/RPC19 RNA polymerase subunit family. Part of the RNA polymerase complex.

Its subcellular location is the cytoplasm. The enzyme catalyses RNA(n) + a ribonucleoside 5'-triphosphate = RNA(n+1) + diphosphate. In terms of biological role, DNA-dependent RNA polymerase (RNAP) catalyzes the transcription of DNA into RNA using the four ribonucleoside triphosphates as substrates. This chain is DNA-directed RNA polymerase subunit Rpo11, found in Pyrobaculum aerophilum (strain ATCC 51768 / DSM 7523 / JCM 9630 / CIP 104966 / NBRC 100827 / IM2).